A 416-amino-acid polypeptide reads, in one-letter code: Subtilisin-like protease 12 (416 aa).

A signal peptide spans 1–19 (MSILKMMLIYFAIFWVVNA). The propeptide occupies 20–116 (AQLLDIDSQG…VEPNKEMQVA (97 aa)). The Inhibitor I9 domain maps to 35–115 (YIVVMKDRVS…FVEPNKEMQV (81 aa)). Residues N123, N136, and N150 are each glycosylated (N-linked (GlcNAc...) asparagine). One can recognise a Peptidase S8 domain in the interval 125-416 (TWGLSRISHK…NKLLYNGSGA (292 aa)). Catalysis depends on charge relay system residues D157 and H188. Residues N249, N305, N334, and N353 are each glycosylated (N-linked (GlcNAc...) asparagine). The active-site Charge relay system is the S362. N404 and N412 each carry an N-linked (GlcNAc...) asparagine glycan.

It belongs to the peptidase S8 family.

It is found in the secreted. Its function is as follows. Secreted subtilisin-like serine protease with keratinolytic activity that contributes to pathogenicity. The polypeptide is Subtilisin-like protease 12 (SUB12) (Arthroderma benhamiae (strain ATCC MYA-4681 / CBS 112371) (Trichophyton mentagrophytes)).